Consider the following 358-residue polypeptide: MVDIIFSSSFLDDMGDHSKKKSGLAMCVGCGSQIHDQYILRVSPDLEWHAACLKCVECNQYLDETCTCFVRDGKTYCKRDYVRLFGIKCAKCTLGFSSSDLVMRARDSVYHIECFRCSVCSRQLLPGDEFSVRDEELLCRADHGLALERGPGGSPLSPGNIHTRGLHMAADPVSVRQTPHRNHVHKQSEKTTRVRTVLNEKQLHTLRTCYNANPRPDALMKEQLVEMTGLSPRVIRVWFQNKRCKDKKRSILMKQLQQQHGDKTNLQGMTGTALVAGSPIRHNPSVPGHPVDVQAYQPPWKALSEFALQSDLDQPAFQQLVSFSESGSLGNSSGSDVTSLSSQLPDTPNSMVPSPVET.

2 consecutive LIM zinc-binding domains span residues 27–80 and 89–143; these read CVGC…CKRD and CAKC…RADH. A DNA-binding region (homeobox) is located at residues 191 to 250; the sequence is TTRVRTVLNEKQLHTLRTCYNANPRPDALMKEQLVEMTGLSPRVIRVWFQNKRCKDKKRS. Residues 325-335 show a composition bias toward low complexity; that stretch reads ESGSLGNSSGS. The disordered stretch occupies residues 325–358; sequence ESGSLGNSSGSDVTSLSSQLPDTPNSMVPSPVET. Residues 336–358 are compositionally biased toward polar residues; sequence DVTSLSSQLPDTPNSMVPSPVET.

It is found in the nucleus. Functionally, binds to one of the cis-acting domain of the insulin gene enhancer. May be involved in the regional specification of the myotome and also in target recognition by the caudal primary neuron. The sequence is that of Insulin gene enhancer protein isl-2b (isl2b) from Danio rerio (Zebrafish).